Here is a 354-residue protein sequence, read N- to C-terminus: Fe(3+) ions import ATP-binding protein FbpC (354 aa).

An ABC transporter domain is found at 4-236 (LELHAVHKSF…PRDAQTALFL (233 aa)). Residue 36–43 (GPSGSGKT) participates in ATP binding.

The protein belongs to the ABC transporter superfamily. Fe(3+) ion importer (TC 3.A.1.10) family. As to quaternary structure, the complex is composed of two ATP-binding proteins (FbpC), two transmembrane proteins (FbpB) and a solute-binding protein (FbpA).

The protein resides in the cell inner membrane. The catalysed reaction is Fe(3+)(out) + ATP + H2O = Fe(3+)(in) + ADP + phosphate + H(+). In terms of biological role, part of the ABC transporter complex FbpABC involved in Fe(3+) ions import. Responsible for energy coupling to the transport system. The chain is Fe(3+) ions import ATP-binding protein FbpC from Pseudomonas fluorescens (strain ATCC BAA-477 / NRRL B-23932 / Pf-5).